A 151-amino-acid polypeptide reads, in one-letter code: Ocs element-binding factor 1 (151 aa).

Residues 1–17 are compositionally biased toward polar residues; sequence MSSSSLSPTAGRTSGSD. Residues 1 to 47 are disordered; that stretch reads MSSSSLSPTAGRTSGSDGDSAADTHRREKRRLSNRESARRSRLRKQQ. A compositionally biased stretch (basic and acidic residues) spans 22 to 39; the sequence is ADTHRREKRRLSNRESAR. The region spanning 24–87 is the bZIP domain; that stretch reads THRREKRRLS…TRVEQENTVL (64 aa). Residues 26–45 are basic motif; the sequence is RREKRRLSNRESARRSRLRK. Residues 52–59 form a leucine-zipper region; it reads LVQEVARL.

The protein belongs to the bZIP family. Roots and shoots of young plants, and basal portion of leaves.

It is found in the nucleus. May contribute to developmentally specific patterns of gene expression. Binds specifically to ocs elements which are transcriptional enhancer found in the promoters of several plant genes. OCSBF-1 is able to bind to a site within each half of the ocs element as well as to animal AP-1 and CREB sites. The polypeptide is Ocs element-binding factor 1 (OBF1) (Zea mays (Maize)).